A 255-amino-acid polypeptide reads, in one-letter code: tRNA (guanine-N(1)-)-methyltransferase (255 aa).

Residues G113 and 133 to 138 contribute to the S-adenosyl-L-methionine site; that span reads IGDYVL.

This sequence belongs to the RNA methyltransferase TrmD family. As to quaternary structure, homodimer.

It localises to the cytoplasm. It catalyses the reaction guanosine(37) in tRNA + S-adenosyl-L-methionine = N(1)-methylguanosine(37) in tRNA + S-adenosyl-L-homocysteine + H(+). In terms of biological role, specifically methylates guanosine-37 in various tRNAs. The polypeptide is tRNA (guanine-N(1)-)-methyltransferase (Shigella flexneri serotype 5b (strain 8401)).